Reading from the N-terminus, the 360-residue chain is Peptide chain release factor 1 (360 aa).

Q235 carries the N5-methylglutamine modification.

The protein belongs to the prokaryotic/mitochondrial release factor family. Methylated by PrmC. Methylation increases the termination efficiency of RF1.

Its subcellular location is the cytoplasm. In terms of biological role, peptide chain release factor 1 directs the termination of translation in response to the peptide chain termination codons UAG and UAA. The sequence is that of Peptide chain release factor 1 from Burkholderia thailandensis (strain ATCC 700388 / DSM 13276 / CCUG 48851 / CIP 106301 / E264).